A 268-amino-acid chain; its full sequence is MLQYPHINPVALQLGPIKIHWYGLMYLLGIFAGWYLTRYRAKVKPWAPIKPEQVGDLTFYVALGVILGGRIGYIIFYNLPYYFHNPSQMFFLWDGGMSFHGGFIGVLIAFALFARKIGANFFDLGEFVAPVIPIGLGAGRIGNFINGELLGKVTDSPLGMVFPTGGPLPRYPSQLFEFFFEGVVLFSVLWLVTIKKRPRYLVLGLFMFLYGYARFICEFFRQPDPQYGYIFFNWMTMGQILSIPMILLGAVILIAVFIKTRKNKCENI.

Helical transmembrane passes span 14 to 34 (LGPIKIHWYGLMYLLGIFAGW), 57 to 77 (LTFYVALGVILGGRIGYIIFY), 90 to 110 (FFLWDGGMSFHGGFIGVLIAF), and 117 to 137 (IGANFFDLGEFVAPVIPIGLG). An a 1,2-diacyl-sn-glycero-3-phospho-(1'-sn-glycerol)-binding site is contributed by Arg-140. A run of 3 helical transmembrane segments spans residues 174–194 (QLFEFFFEGVVLFSVLWLVTI), 200–220 (YLVLGLFMFLYGYARFICEFF), and 238–258 (GQILSIPMILLGAVILIAVFI).

It belongs to the Lgt family.

It localises to the cell inner membrane. The catalysed reaction is L-cysteinyl-[prolipoprotein] + a 1,2-diacyl-sn-glycero-3-phospho-(1'-sn-glycerol) = an S-1,2-diacyl-sn-glyceryl-L-cysteinyl-[prolipoprotein] + sn-glycerol 1-phosphate + H(+). The protein operates within protein modification; lipoprotein biosynthesis (diacylglyceryl transfer). Functionally, catalyzes the transfer of the diacylglyceryl group from phosphatidylglycerol to the sulfhydryl group of the N-terminal cysteine of a prolipoprotein, the first step in the formation of mature lipoproteins. The chain is Phosphatidylglycerol--prolipoprotein diacylglyceryl transferase from Francisella tularensis subsp. holarctica (strain FTNF002-00 / FTA).